The chain runs to 657 residues: Protein translocase subunit SecA 2 (657 aa).

ATP-binding positions include Gln-93, 111–115 (GEGKT), and Asp-531.

The protein belongs to the SecA family. As to quaternary structure, monomer and homodimer. Part of the essential Sec protein translocation apparatus which comprises SecA, SecYEG and auxiliary proteins SecDF. Other proteins may also be involved.

The protein localises to the cell inner membrane. Its subcellular location is the cytoplasm. The enzyme catalyses ATP + H2O + cellular proteinSide 1 = ADP + phosphate + cellular proteinSide 2.. Functionally, part of the Sec protein translocase complex. Interacts with the SecYEG preprotein conducting channel. Has a central role in coupling the hydrolysis of ATP to the transfer of proteins into and across the cell membrane, serving as an ATP-driven molecular motor driving the stepwise translocation of polypeptide chains across the membrane. This Rhodopirellula baltica (strain DSM 10527 / NCIMB 13988 / SH1) protein is Protein translocase subunit SecA 2.